A 145-amino-acid chain; its full sequence is Superoxide dismutase [Mn/Fe] (145 aa).

Residues His-10 and His-64 each contribute to the Fe(3+) site. Residues His-10 and His-64 each contribute to the Mn(2+) site.

Belongs to the iron/manganese superoxide dismutase family. It depends on Mn(2+) as a cofactor. The cofactor is Fe(3+).

The enzyme catalyses 2 superoxide + 2 H(+) = H2O2 + O2. In terms of biological role, destroys superoxide anion radicals which are normally produced within the cells and which are toxic to biological systems. Catalyzes the dismutation of superoxide anion radicals into O2 and H2O2 by successive reduction and oxidation of the transition metal ion at the active site. The sequence is that of Superoxide dismutase [Mn/Fe] (sodA) from Streptococcus canis.